The following is a 257-amino-acid chain: Imidazole glycerol phosphate synthase subunit HisF (257 aa).

Catalysis depends on residues Asp11 and Asp130.

The protein belongs to the HisA/HisF family. As to quaternary structure, heterodimer of HisH and HisF.

It is found in the cytoplasm. The enzyme catalyses 5-[(5-phospho-1-deoxy-D-ribulos-1-ylimino)methylamino]-1-(5-phospho-beta-D-ribosyl)imidazole-4-carboxamide + L-glutamine = D-erythro-1-(imidazol-4-yl)glycerol 3-phosphate + 5-amino-1-(5-phospho-beta-D-ribosyl)imidazole-4-carboxamide + L-glutamate + H(+). It participates in amino-acid biosynthesis; L-histidine biosynthesis; L-histidine from 5-phospho-alpha-D-ribose 1-diphosphate: step 5/9. In terms of biological role, IGPS catalyzes the conversion of PRFAR and glutamine to IGP, AICAR and glutamate. The HisF subunit catalyzes the cyclization activity that produces IGP and AICAR from PRFAR using the ammonia provided by the HisH subunit. This Shewanella sp. (strain MR-4) protein is Imidazole glycerol phosphate synthase subunit HisF.